We begin with the raw amino-acid sequence, 543 residues long: Probable protein kinase UbiB (543 aa).

The 378-residue stretch at 123–500 folds into the Protein kinase domain; it reads DFDQQPLASA…HRRHAQARFL (378 aa). ATP contacts are provided by residues 129 to 137 and Lys152; that span reads LASASVAQV. Asp286 (proton acceptor) is an active-site residue. Helical transmembrane passes span 499–519 and 521–541; these read FLLG…PTHE and LASA…WKIS.

The protein belongs to the ABC1 family. UbiB subfamily.

The protein resides in the cell inner membrane. It functions in the pathway cofactor biosynthesis; ubiquinone biosynthesis [regulation]. Its function is as follows. Is probably a protein kinase regulator of UbiI activity which is involved in aerobic coenzyme Q (ubiquinone) biosynthesis. The protein is Probable protein kinase UbiB of Tolumonas auensis (strain DSM 9187 / NBRC 110442 / TA 4).